Here is a 159-residue protein sequence, read N- to C-terminus: Small ribosomal subunit protein uS9 (159 aa).

Belongs to the universal ribosomal protein uS9 family.

The chain is Small ribosomal subunit protein uS9 from Rickettsia africae (strain ESF-5).